The primary structure comprises 339 residues: Cullin-associated NEDD8-dissociated protein 1, N-terminal part (339 aa).

2 HEAT repeats span residues 5–42 (HTIQQNLNGLLSKLNDPDPDMRYMSLNDLYGILSNPCS) and 50–87 (ASATRLAEGLLKALDDQHGDVQNQALKCLGPLVARLPL).

As to quaternary structure, interacts with candA-C. Interacts with unneddylated cullins culA and culD; interaction occurs only when complexed with candA-C.

Its subcellular location is the nucleus. In terms of biological role, assembly factor of SCF (SKP1-CUL1-F-box protein) E3 ubiquitin ligase complexes that promotes the exchange of the substrate-recognition F-box subunit in SCF complexes, thereby playing a key role in the cellular repertoire of SCF complexes. Acts as a F-box protein exchange factor when interacting with candA-C. This chain is Cullin-associated NEDD8-dissociated protein 1, N-terminal part (candA-N), found in Emericella nidulans (strain FGSC A4 / ATCC 38163 / CBS 112.46 / NRRL 194 / M139) (Aspergillus nidulans).